Reading from the N-terminus, the 711-residue chain is Ribosomal RNA large subunit methyltransferase K/L (711 aa).

Residues 43 to 154 enclose the THUMP domain; that stretch reads TLYRTLLWSR…RENLVISLDL (112 aa).

This sequence belongs to the methyltransferase superfamily. RlmKL family.

Its subcellular location is the cytoplasm. It carries out the reaction guanosine(2445) in 23S rRNA + S-adenosyl-L-methionine = N(2)-methylguanosine(2445) in 23S rRNA + S-adenosyl-L-homocysteine + H(+). It catalyses the reaction guanosine(2069) in 23S rRNA + S-adenosyl-L-methionine = N(2)-methylguanosine(2069) in 23S rRNA + S-adenosyl-L-homocysteine + H(+). Its function is as follows. Specifically methylates the guanine in position 2445 (m2G2445) and the guanine in position 2069 (m7G2069) of 23S rRNA. The sequence is that of Ribosomal RNA large subunit methyltransferase K/L from Haemophilus influenzae (strain ATCC 51907 / DSM 11121 / KW20 / Rd).